The sequence spans 545 residues: Phenylalanine--tRNA ligase beta subunit (545 aa).

Residues 268–343 enclose the B5 domain; that stretch reads FLHKIQNVRE…MSIGYNNLEP (76 aa). Positions 321, 327, 330, and 331 each coordinate Mg(2+).

The protein belongs to the phenylalanyl-tRNA synthetase beta subunit family. Type 2 subfamily. As to quaternary structure, tetramer of two alpha and two beta subunits. It depends on Mg(2+) as a cofactor.

It localises to the cytoplasm. It carries out the reaction tRNA(Phe) + L-phenylalanine + ATP = L-phenylalanyl-tRNA(Phe) + AMP + diphosphate + H(+). The polypeptide is Phenylalanine--tRNA ligase beta subunit (Saccharolobus islandicus (strain M.14.25 / Kamchatka #1) (Sulfolobus islandicus)).